Consider the following 335-residue polypeptide: Glyceraldehyde-3-phosphate dehydrogenase 2 (335 aa).

NAD(+) contacts are provided by residues 13-14, Asp34, and Met79; that span reads RI. Residues 151 to 153, Thr182, 211 to 212, and Arg234 contribute to the D-glyceraldehyde 3-phosphate site; these read SCT and TG. Cys152 serves as the catalytic Nucleophile. Asn316 contacts NAD(+).

The protein belongs to the glyceraldehyde-3-phosphate dehydrogenase family. Homotetramer.

The protein resides in the cytoplasm. It carries out the reaction D-glyceraldehyde 3-phosphate + phosphate + NAD(+) = (2R)-3-phospho-glyceroyl phosphate + NADH + H(+). Its pathway is carbohydrate degradation; glycolysis; pyruvate from D-glyceraldehyde 3-phosphate: step 1/5. Functionally, glyceraldehyde-3-phosphate dehydrogenase is a key enzyme in glycolysis that catalyzes the first step of the pathway by converting D-glyceraldehyde 3-phosphate (G3P) into 3-phospho-D-glyceroyl phosphate. In Danio rerio (Zebrafish), this protein is Glyceraldehyde-3-phosphate dehydrogenase 2 (gapdh-2).